Here is a 268-residue protein sequence, read N- to C-terminus: Glucosamine-6-phosphate deaminase (268 aa).

Residue aspartate 67 is the Proton acceptor; for enolization step of the active site. The For ring-opening step role is filled by asparagine 137. Histidine 139 functions as the Proton acceptor; for ring-opening step in the catalytic mechanism. Glutamate 144 acts as the For ring-opening step in catalysis.

This sequence belongs to the glucosamine/galactosamine-6-phosphate isomerase family. NagB subfamily. As to quaternary structure, homohexamer.

It carries out the reaction alpha-D-glucosamine 6-phosphate + H2O = beta-D-fructose 6-phosphate + NH4(+). It functions in the pathway amino-sugar metabolism; N-acetylneuraminate degradation; D-fructose 6-phosphate from N-acetylneuraminate: step 5/5. Catalyzes the reversible isomerization-deamination of glucosamine 6-phosphate (GlcN6P) to form fructose 6-phosphate (Fru6P) and ammonium ion. In Pseudoalteromonas translucida (strain TAC 125), this protein is Glucosamine-6-phosphate deaminase.